The chain runs to 739 residues: Homeobox protein SIX5 (739 aa).

Low complexity-rich tracts occupy residues 1–24 (MATL…AAAA), 34–61 (QLLQ…AAGA), and 74–83 (PEAASEPPTG). 4 disordered regions span residues 1-84 (MATL…PTGL), 251-294 (NRRQ…AAPV), 361-381 (LTGG…SETK), and 617-650 (LSAQ…FPAP). Residues 201–260 (GEETVYCFKERSRAALKACYRGNRYPTPDEKRRLATLTGLSLTQVSNWFKNRRQRDRTGA) constitute a DNA-binding region (homeobox). Positions 279 to 289 (ESSRSPEDLER) are enriched in basic and acidic residues. The segment covering 617–646 (LSAQQPPPAAATTSSTSLPFSPDSPGLLPN) has biased composition (low complexity).

The protein belongs to the SIX/Sine oculis homeobox family. In terms of assembly, probably binds DNA dimer. Interacts with EYA3, and probably EYA1 and EYA2. In terms of tissue distribution, expressed in adult but not in fetal eyes. Found in corneal epithelium and endothelium, lens epithelium, ciliary body epithelia, cellular layers of the retina and the sclera.

Its subcellular location is the cytoplasm. The protein localises to the nucleus. In terms of biological role, transcription factor that is thought to be involved in regulation of organogenesis. May be involved in determination and maintenance of retina formation. Binds a 5'-GGTGTCAG-3' motif present in the ARE regulatory element of ATP1A1. Binds a 5'-TCA[AG][AG]TTNC-3' motif present in the MEF3 element in the myogenin promoter, and in the IGFBP5 promoter. Thought to be regulated by association with Dach and Eya proteins, and seems to be coactivated by EYA1, EYA2 and EYA3. The sequence is that of Homeobox protein SIX5 (SIX5) from Homo sapiens (Human).